Here is a 250-residue protein sequence, read N- to C-terminus: tRNA (guanine-N(7)-)-methyltransferase (250 aa).

The S-adenosyl-L-methionine site is built by Glu79, Glu104, Asp131, and Asp154. Residue Asp154 is part of the active site. Substrate contacts are provided by residues Lys158, Asp190, and 228-231; that span reads TKFE.

Belongs to the class I-like SAM-binding methyltransferase superfamily. TrmB family.

The catalysed reaction is guanosine(46) in tRNA + S-adenosyl-L-methionine = N(7)-methylguanosine(46) in tRNA + S-adenosyl-L-homocysteine. Its pathway is tRNA modification; N(7)-methylguanine-tRNA biosynthesis. Its function is as follows. Catalyzes the formation of N(7)-methylguanine at position 46 (m7G46) in tRNA. The sequence is that of tRNA (guanine-N(7)-)-methyltransferase from Actinobacillus pleuropneumoniae serotype 5b (strain L20).